The primary structure comprises 112 residues: Large ribosomal subunit protein mL53 (112 aa).

It belongs to the mitochondrion-specific ribosomal protein mL53 family. In terms of assembly, component of the mitochondrial ribosome large subunit (39S) which comprises a 16S rRNA and about 50 distinct proteins.

Its subcellular location is the mitochondrion. In Pongo abelii (Sumatran orangutan), this protein is Large ribosomal subunit protein mL53 (MRPL53).